Here is a 130-residue protein sequence, read N- to C-terminus: Small ribosomal subunit protein uS8 (130 aa).

It belongs to the universal ribosomal protein uS8 family.

In Paracentrotus lividus (Common sea urchin), this protein is Small ribosomal subunit protein uS8 (RPS15A).